A 203-amino-acid chain; its full sequence is Thymidylate kinase (203 aa).

10–17 (GIDGSGKS) lines the ATP pocket.

It belongs to the thymidylate kinase family.

It carries out the reaction dTMP + ATP = dTDP + ADP. Its function is as follows. Phosphorylation of dTMP to form dTDP in both de novo and salvage pathways of dTTP synthesis. The protein is Thymidylate kinase of Brachyspira hyodysenteriae (strain ATCC 49526 / WA1).